The primary structure comprises 282 residues: Pantothenate synthetase (282 aa).

26-33 (MGNLHEGH) contacts ATP. The active-site Proton donor is H33. Residue Q57 participates in (R)-pantoate binding. Q57 lines the beta-alanine pocket. Position 144–147 (144–147 (GQKD)) interacts with ATP. Position 150 (Q150) interacts with (R)-pantoate. Residues L173 and 181–184 (LSSR) contribute to the ATP site.

It belongs to the pantothenate synthetase family. Homodimer.

It localises to the cytoplasm. It carries out the reaction (R)-pantoate + beta-alanine + ATP = (R)-pantothenate + AMP + diphosphate + H(+). It functions in the pathway cofactor biosynthesis; (R)-pantothenate biosynthesis; (R)-pantothenate from (R)-pantoate and beta-alanine: step 1/1. Its function is as follows. Catalyzes the condensation of pantoate with beta-alanine in an ATP-dependent reaction via a pantoyl-adenylate intermediate. In Albidiferax ferrireducens (strain ATCC BAA-621 / DSM 15236 / T118) (Rhodoferax ferrireducens), this protein is Pantothenate synthetase.